Consider the following 508-residue polypeptide: Phenylalanine--tRNA ligase alpha subunit (508 aa).

Position 2 is an N-acetylalanine (Ala-2). At Thr-190 the chain carries Phosphothreonine. 2 positions are modified to phosphoserine: Ser-193 and Ser-301. Position 311 is an N6-acetyllysine (Lys-311). L-phenylalanine-binding positions include Thr-329, 372–374, and Tyr-412; that span reads QIE. Glu-414 is a Mg(2+) binding site. Position 438 (Phe-438) interacts with L-phenylalanine.

This sequence belongs to the class-II aminoacyl-tRNA synthetase family. Phe-tRNA synthetase alpha subunit type 2 subfamily. As to quaternary structure, heterotetramer; dimer of two heterodimers formed by FARSA and FARSB.

The protein localises to the cytoplasm. It carries out the reaction tRNA(Phe) + L-phenylalanine + ATP = L-phenylalanyl-tRNA(Phe) + AMP + diphosphate + H(+). This Homo sapiens (Human) protein is Phenylalanine--tRNA ligase alpha subunit (FARSA).